Reading from the N-terminus, the 262-residue chain is Pyridoxine 5'-phosphate synthase (262 aa).

Asn6 contributes to the 3-amino-2-oxopropyl phosphate binding site. Position 8 to 9 (8 to 9 (DH)) interacts with 1-deoxy-D-xylulose 5-phosphate. Position 17 (Arg17) interacts with 3-amino-2-oxopropyl phosphate. The active-site Proton acceptor is His43. Residues Arg45 and His50 each coordinate 1-deoxy-D-xylulose 5-phosphate. Residue Glu70 is the Proton acceptor of the active site. Thr102 serves as a coordination point for 1-deoxy-D-xylulose 5-phosphate. His215 (proton donor) is an active-site residue. 3-amino-2-oxopropyl phosphate is bound by residues Gly216 and 237 to 238 (GH).

The protein belongs to the PNP synthase family. As to quaternary structure, homooctamer; tetramer of dimers.

The protein localises to the cytoplasm. The enzyme catalyses 3-amino-2-oxopropyl phosphate + 1-deoxy-D-xylulose 5-phosphate = pyridoxine 5'-phosphate + phosphate + 2 H2O + H(+). The protein operates within cofactor biosynthesis; pyridoxine 5'-phosphate biosynthesis; pyridoxine 5'-phosphate from D-erythrose 4-phosphate: step 5/5. In terms of biological role, catalyzes the complicated ring closure reaction between the two acyclic compounds 1-deoxy-D-xylulose-5-phosphate (DXP) and 3-amino-2-oxopropyl phosphate (1-amino-acetone-3-phosphate or AAP) to form pyridoxine 5'-phosphate (PNP) and inorganic phosphate. This Helicobacter pylori (strain P12) protein is Pyridoxine 5'-phosphate synthase.